Reading from the N-terminus, the 138-residue chain is Small ribosomal subunit protein uS11c (138 aa).

The segment at 1-22 (MTKPIPRIGSRRNGRIGSRKNA) is disordered. A compositionally biased stretch (basic residues) spans 9 to 22 (GSRRNGRIGSRKNA).

The protein belongs to the universal ribosomal protein uS11 family. Part of the 30S ribosomal subunit.

It is found in the plastid. Its subcellular location is the chloroplast. This chain is Small ribosomal subunit protein uS11c, found in Dioscorea elephantipes (Elephant's foot yam).